Consider the following 128-residue polypeptide: Insulin-like 3 (128 aa).

The first 15 residues, 1 to 15 (MHALLLLLLLALGSA), serve as a signal peptide directing secretion. Disulfide bonds link Cys-29–Cys-113, Cys-41–Cys-126, and Cys-112–Cys-117. Low complexity predominate over residues 81 to 94 (ALDPDPALDPQLPH). Residues 81 to 101 (ALDPDPALDPQLPHQASQRQR) form a disordered region.

Belongs to the insulin family. In terms of assembly, heterodimer of a B chain and an A chain linked by two disulfide bonds. Expressed in Leydig cells of the testis, and weakly in the theca interna cells of antral follicles and the corpus luteum of the ovary.

The protein resides in the secreted. Functionally, seems to play a role in testicular function. May be a trophic hormone with a role in testicular descent in fetal life. Is a ligand for LGR8 receptor. The chain is Insulin-like 3 (Insl3) from Rattus norvegicus (Rat).